Consider the following 790-residue polypeptide: Spermatogenesis-associated protein 20 (790 aa).

A compositionally biased stretch (basic residues) spans M1–G19. The disordered stretch occupies residues M1 to N67. A Phosphoserine modification is found at S5. The segment covering G23–S36 has biased composition (basic and acidic residues). Phosphoserine is present on S653.

The protein resides in the secreted. Its function is as follows. May play a role in fertility regulation. The protein is Spermatogenesis-associated protein 20 (Spata20) of Mus musculus (Mouse).